The primary structure comprises 187 residues: Large ribosomal subunit protein bL17 (187 aa).

The protein belongs to the bacterial ribosomal protein bL17 family. As to quaternary structure, part of the 50S ribosomal subunit. Contacts protein L32.

This is Large ribosomal subunit protein bL17 from Rhodococcus opacus (strain B4).